Reading from the N-terminus, the 433-residue chain is Serine--tRNA ligase (433 aa).

235-237 (TSE) provides a ligand contact to L-serine. 266 to 268 (RSE) lines the ATP pocket. Glu289 contacts L-serine. 353 to 356 (EISS) is an ATP binding site. Position 388 (Ser388) interacts with L-serine.

The protein belongs to the class-II aminoacyl-tRNA synthetase family. Type-1 seryl-tRNA synthetase subfamily. In terms of assembly, homodimer. The tRNA molecule binds across the dimer.

It is found in the cytoplasm. It carries out the reaction tRNA(Ser) + L-serine + ATP = L-seryl-tRNA(Ser) + AMP + diphosphate + H(+). The catalysed reaction is tRNA(Sec) + L-serine + ATP = L-seryl-tRNA(Sec) + AMP + diphosphate + H(+). Its pathway is aminoacyl-tRNA biosynthesis; selenocysteinyl-tRNA(Sec) biosynthesis; L-seryl-tRNA(Sec) from L-serine and tRNA(Sec): step 1/1. Functionally, catalyzes the attachment of serine to tRNA(Ser). Is also able to aminoacylate tRNA(Sec) with serine, to form the misacylated tRNA L-seryl-tRNA(Sec), which will be further converted into selenocysteinyl-tRNA(Sec). This Burkholderia ambifaria (strain MC40-6) protein is Serine--tRNA ligase.